Consider the following 524-residue polypeptide: Gamma-taxilin (524 aa).

Residues 1–10 (MATRLEEVTR) are compositionally biased toward basic and acidic residues. Disordered regions lie at residues 1–37 (MATR…KFEI) and 64–86 (LQHQ…DEGS). Omega-N-methylarginine is present on residues R12 and R24. Phosphoserine is present on residues S79, S86, and S97. A compositionally biased stretch (basic and acidic residues) spans 106-115 (REEIPGREAR). Positions 106-130 (REEIPGREARTGPPDGQQDSECSRN) are disordered. Residues 153–465 (EEKLAALCKK…KEQVSIKAAD (313 aa)) adopt a coiled-coil conformation. Y283 is modified (phosphotyrosine). Residues 501-524 (VCEKSAAQKPSSSGSPAQGIESVD) are disordered. S512 carries the phosphoserine modification.

The protein belongs to the taxilin family. In terms of assembly, binds to the C-terminal coiled coil region of syntaxin family members STX1A, STX3A and STX4A. Forms a heterodimer with ATF4 in osteoblasts.

It is found in the nucleus membrane. It localises to the cytoplasm. The protein resides in the cytosol. In terms of biological role, may be involved in intracellular vesicle traffic. Inhibits ATF4-mediated transcription, possibly by dimerizing with ATF4 to form inactive dimers that cannot bind DNA. May be involved in regulating bone mass density through an ATF4-dependent pathway. May be involved in cell cycle progression. In Mus musculus (Mouse), this protein is Gamma-taxilin (Txlng).